We begin with the raw amino-acid sequence, 444 residues long: Phosphoglucosamine mutase (444 aa).

Catalysis depends on S102, which acts as the Phosphoserine intermediate. Residues S102, D241, D243, and D245 each contribute to the Mg(2+) site. S102 bears the Phosphoserine mark.

The protein belongs to the phosphohexose mutase family. Requires Mg(2+) as cofactor. Post-translationally, activated by phosphorylation.

The catalysed reaction is alpha-D-glucosamine 1-phosphate = D-glucosamine 6-phosphate. In terms of biological role, catalyzes the conversion of glucosamine-6-phosphate to glucosamine-1-phosphate. The protein is Phosphoglucosamine mutase of Pasteurella multocida (strain Pm70).